The sequence spans 396 residues: Elongation factor Tu (396 aa).

The tr-type G domain maps to 11–205; the sequence is KPHVNIGTIG…TVDEYIPTPE (195 aa). The segment at 20 to 27 is G1; that stretch reads GHVDHGKT. Residue 20–27 participates in GTP binding; the sequence is GHVDHGKT. Threonine 27 contacts Mg(2+). Residues 61-65 are G2; that stretch reads GITIN. Positions 82–85 are G3; sequence DAPG. GTP is bound by residues 82–86 and 137–140; these read DAPGH and NKVD. A G4 region spans residues 137–140; sequence NKVD. Residues 175–177 form a G5 region; sequence SAL.

Belongs to the TRAFAC class translation factor GTPase superfamily. Classic translation factor GTPase family. EF-Tu/EF-1A subfamily. In terms of assembly, monomer.

It is found in the cytoplasm. It catalyses the reaction GTP + H2O = GDP + phosphate + H(+). GTP hydrolase that promotes the GTP-dependent binding of aminoacyl-tRNA to the A-site of ribosomes during protein biosynthesis. This Lactobacillus johnsonii (strain CNCM I-12250 / La1 / NCC 533) protein is Elongation factor Tu.